Here is a 333-residue protein sequence, read N- to C-terminus: Adenosine deaminase (333 aa).

The Zn(2+) site is built by histidine 12 and histidine 14. The substrate site is built by histidine 14, aspartate 16, and glycine 170. Histidine 197 contributes to the Zn(2+) binding site. The active-site Proton donor is glutamate 200. Aspartate 278 serves as a coordination point for Zn(2+). Aspartate 279 serves as a coordination point for substrate.

This sequence belongs to the metallo-dependent hydrolases superfamily. Adenosine and AMP deaminases family. Adenosine deaminase subfamily. The cofactor is Zn(2+).

It carries out the reaction adenosine + H2O + H(+) = inosine + NH4(+). The catalysed reaction is 2'-deoxyadenosine + H2O + H(+) = 2'-deoxyinosine + NH4(+). Its function is as follows. Catalyzes the hydrolytic deamination of adenosine and 2-deoxyadenosine. The polypeptide is Adenosine deaminase (Escherichia coli (strain SMS-3-5 / SECEC)).